Here is a 149-residue protein sequence, read N- to C-terminus: Calmodulin (149 aa).

The residue at position 2 (A2) is an N-acetylalanine. EF-hand domains are found at residues 8-43 (EQIA…LGQN), 44-79 (PTEA…KMKD), 81-116 (DSEE…LGEK), and 117-149 (LTDE…MMSK). Ca(2+)-binding residues include D21, D23, D25, T27, E32, D57, D59, N61, T63, E68, D94, D96, N98, and E105. Position 116 is an N6,N6,N6-trimethyllysine (K116). The Ca(2+) site is built by D130, D132, D134, Q136, and E141.

The protein belongs to the calmodulin family.

Calmodulin mediates the control of a large number of enzymes, ion channels and other proteins by Ca(2+). Among the enzymes to be stimulated by the calmodulin-Ca(2+) complex are a number of protein kinases and phosphatases. The polypeptide is Calmodulin (cam) (Saccharina japonica (Sweet kelp)).